Here is a 212-residue protein sequence, read N- to C-terminus: ATP phosphoribosyltransferase (212 aa).

This sequence belongs to the ATP phosphoribosyltransferase family. Short subfamily. As to quaternary structure, heteromultimer composed of HisG and HisZ subunits.

Its subcellular location is the cytoplasm. The enzyme catalyses 1-(5-phospho-beta-D-ribosyl)-ATP + diphosphate = 5-phospho-alpha-D-ribose 1-diphosphate + ATP. It participates in amino-acid biosynthesis; L-histidine biosynthesis; L-histidine from 5-phospho-alpha-D-ribose 1-diphosphate: step 1/9. Its function is as follows. Catalyzes the condensation of ATP and 5-phosphoribose 1-diphosphate to form N'-(5'-phosphoribosyl)-ATP (PR-ATP). Has a crucial role in the pathway because the rate of histidine biosynthesis seems to be controlled primarily by regulation of HisG enzymatic activity. The sequence is that of ATP phosphoribosyltransferase from Prochlorococcus marinus (strain AS9601).